The following is a 244-amino-acid chain: Carboxy-S-adenosyl-L-methionine synthase (244 aa).

Residues Tyr-40, 65–67 (GCS), 90–91 (DN), 119–120 (DL), Asn-134, and Arg-201 each bind S-adenosyl-L-methionine.

Belongs to the class I-like SAM-binding methyltransferase superfamily. Cx-SAM synthase family. Homodimer.

It catalyses the reaction prephenate + S-adenosyl-L-methionine = carboxy-S-adenosyl-L-methionine + 3-phenylpyruvate + H2O. In terms of biological role, catalyzes the conversion of S-adenosyl-L-methionine (SAM) to carboxy-S-adenosyl-L-methionine (Cx-SAM). The polypeptide is Carboxy-S-adenosyl-L-methionine synthase (Geobacter metallireducens (strain ATCC 53774 / DSM 7210 / GS-15)).